The following is a 246-amino-acid chain: Virulence plasmid protein pGP6-D (246 aa).

The protein belongs to the UPF0137 (pGP6-D) family.

The chain is Virulence plasmid protein pGP6-D from Chlamydia psittaci (Chlamydophila psittaci).